The chain runs to 365 residues: uncharacterized protein (365 aa).

In terms of domain architecture, Radical SAM core spans 45–289 (FSIGKSLTII…LKEVKKSNPK (245 aa)). [4Fe-4S] cluster is bound by residues Cys-60, Cys-68, and Cys-71.

Requires [4Fe-4S] cluster as cofactor.

This is an uncharacterized protein from Methanocaldococcus jannaschii (strain ATCC 43067 / DSM 2661 / JAL-1 / JCM 10045 / NBRC 100440) (Methanococcus jannaschii).